The primary structure comprises 607 residues: Fatty acid amide hydrolase (607 aa).

Catalysis depends on charge relay system residues K204 and S280. 301–304 is a substrate binding site; sequence GGGS. Catalysis depends on S304, which acts as the Acyl-ester intermediate.

Belongs to the amidase family. Forms homodimers.

The protein localises to the endoplasmic reticulum membrane. Its subcellular location is the cell membrane. It carries out the reaction N-(9Z,12Z-octadecadienoyl)-ethanolamine + H2O = ethanolamine + (9Z,12Z)-octadecadienoate. In terms of biological role, catalyzes the hydrolysis of bioactive endogenous fatty acid amides to their corresponding acids. The hydrolysis of endogenous amidated lipids terminates their participation as lipid mediators in various signaling systems. Converts a wide range of N-acylethanolamines (NAEs) to their corresponding free fatty acids and ethanolamine. The protein is Fatty acid amide hydrolase of Medicago truncatula (Barrel medic).